Here is a 757-residue protein sequence, read N- to C-terminus: 5-methyltetrahydropteroyltriglutamate--homocysteine methyltransferase (757 aa).

Residues 16–19 (RELK) and K112 each bind 5-methyltetrahydropteroyltri-L-glutamate. Residues 433 to 435 (IGS) and E486 each bind L-homocysteine. L-methionine-binding positions include 433–435 (IGS) and E486. 5-methyltetrahydropteroyltri-L-glutamate contacts are provided by residues 517–518 (RC) and W563. An L-homocysteine-binding site is contributed by D601. An L-methionine-binding site is contributed by D601. 5-methyltetrahydropteroyltri-L-glutamate is bound at residue E607. Zn(2+) is bound by residues H643, C645, and E667. H696 functions as the Proton donor in the catalytic mechanism. Residue C728 coordinates Zn(2+).

It belongs to the vitamin-B12 independent methionine synthase family. It depends on Zn(2+) as a cofactor.

It carries out the reaction 5-methyltetrahydropteroyltri-L-glutamate + L-homocysteine = tetrahydropteroyltri-L-glutamate + L-methionine. Its pathway is amino-acid biosynthesis; L-methionine biosynthesis via de novo pathway; L-methionine from L-homocysteine (MetE route): step 1/1. In terms of biological role, catalyzes the transfer of a methyl group from 5-methyltetrahydrofolate to homocysteine resulting in methionine formation. The chain is 5-methyltetrahydropteroyltriglutamate--homocysteine methyltransferase from Histophilus somni (strain 2336) (Haemophilus somnus).